A 930-amino-acid polypeptide reads, in one-letter code: Protein ARABIDILLO 1 (930 aa).

Residues 3-8 (RRVRRK) carry the Nuclear localization signal motif. The F-box domain maps to 44–90 (FVDWISLPYDTVLQLFTCLNYRDRASLASTCKTWRCLGASSCLWTSL). 13 ARM repeats span residues 172 to 212 (RITS…KHCP), 244 to 285 (TSNI…TSSQ), 379 to 418 (PEGL…TFVV), 428 to 467 (CGRA…NLSV), 469 to 508 (ANIA…NLSV), 510 to 552 (EEHK…NLAA), 554 to 594 (DKCS…NLAA), 600 to 639 (NNNA…NLSF), 641 to 683 (DKNR…GLSV), 685 to 724 (EANS…NLAF), 726 to 766 (PGNA…YMFD), 790 to 831 (LDGA…QVTE), and 835 to 875 (IQEA…QFTI).

The protein belongs to the beta-catenin family. As to quaternary structure, interacts with SNL1. Interacts with MYB53, MYB92 and MYB93. Expressed ubiquitously, with higher levels in root tip, pericycle and vasculature.

The protein resides in the nucleus. Its function is as follows. Promotes lateral root initiation and development, independently of auxin (IAA) and abscisis acid (ABA). This chain is Protein ARABIDILLO 1 (FBX5), found in Arabidopsis thaliana (Mouse-ear cress).